We begin with the raw amino-acid sequence, 110 residues long: Large ribosomal subunit protein uL22 (110 aa).

It belongs to the universal ribosomal protein uL22 family. Part of the 50S ribosomal subunit.

Its function is as follows. This protein binds specifically to 23S rRNA; its binding is stimulated by other ribosomal proteins, e.g. L4, L17, and L20. It is important during the early stages of 50S assembly. It makes multiple contacts with different domains of the 23S rRNA in the assembled 50S subunit and ribosome. Functionally, the globular domain of the protein is located near the polypeptide exit tunnel on the outside of the subunit, while an extended beta-hairpin is found that lines the wall of the exit tunnel in the center of the 70S ribosome. In Photorhabdus laumondii subsp. laumondii (strain DSM 15139 / CIP 105565 / TT01) (Photorhabdus luminescens subsp. laumondii), this protein is Large ribosomal subunit protein uL22.